We begin with the raw amino-acid sequence, 344 residues long: MTSGNGSSPVPTAATGNRTQNGENKPPQAVVKPQILTHFIEGFVIQEGAQPFPSHRSRAVLEVGHSSLLTGAQEKYQQSLLAEKVPQQDNNTTTTTTDSEMEETLVPGFPESKGDGDPPKLKCELCGRVDFEYKFKRSKRFCSMACAKRYNVGCTKRVGLFHPDRSKLQKPTVAKHARRRSRKTPLQTVGADPKKQQAAPVTPMNPGPIPSPSALKLSNSQEDSSRCSDNSSYEEPLSPMSASSSLSRARQEHNVEPPNLHSRDPIAMSQDFLPSDPTKWNVEDVYDFVRSLPGCQEISEEFRAQEIDGQALLLLKEDHLMSAMNIKLGPALKLYARISMLKDS.

Residues 1–23 (MTSGNGSSPVPTAATGNRTQNGE) show a composition bias toward polar residues. Residues 1 to 28 (MTSGNGSSPVPTAATGNRTQNGENKPPQ) are disordered. The HD1 signature appears at 25-53 (KPPQAVVKPQILTHFIEGFVIQEGAQPFP). The FCS-type zinc finger occupies 114 to 148 (GDGDPPKLKCELCGRVDFEYKFKRSKRFCSMACAK). 4 residues coordinate Zn(2+): Cys-123, Cys-126, Cys-142, and Cys-146. Residues 165–269 (RSKLQKPTVA…LHSRDPIAMS (105 aa)) form a disordered region. The segment covering 173–183 (VAKHARRRSRK) has biased composition (basic residues). A compositionally biased stretch (polar residues) spans 216–233 (KLSNSQEDSSRCSDNSSY). Positions 234 to 248 (EEPLSPMSASSSLSR) are enriched in low complexity. Residues 280–344 (WNVEDVYDFV…YARISMLKDS (65 aa)) enclose the SAM domain.

As to quaternary structure, component of a PRC1-like complex.

The protein resides in the nucleus. Component of a Polycomb group (PcG) multiprotein PRC1-like complex, a complex class required to maintain the transcriptionally repressive state of many genes, including Hox genes, throughout development. PcG PRC1 complex acts via chromatin remodeling and modification of histones; it mediates monoubiquitination of histone H2A 'Lys-119', rendering chromatin heritably changed in its expressibility. This chain is Polyhomeotic-like protein 2 (phc2), found in Xenopus laevis (African clawed frog).